The following is a 127-amino-acid chain: Glycine cleavage system H protein (127 aa).

One can recognise a Lipoyl-binding domain in the interval 24 to 105 (TALVGITDFA…YGSGWMVKMK (82 aa)). Position 65 is an N6-lipoyllysine (lysine 65).

Belongs to the GcvH family. The glycine cleavage system is composed of four proteins: P, T, L and H. Requires (R)-lipoate as cofactor.

Functionally, the glycine cleavage system catalyzes the degradation of glycine. The H protein shuttles the methylamine group of glycine from the P protein to the T protein. This is Glycine cleavage system H protein from Chlorobium luteolum (strain DSM 273 / BCRC 81028 / 2530) (Pelodictyon luteolum).